We begin with the raw amino-acid sequence, 376 residues long: Dihydroorotate dehydrogenase (quinone) (376 aa).

FMN contacts are provided by residues 74–78 (AGFDK) and Thr-98. Lys-78 contacts substrate. 123–127 (NHMGF) contacts substrate. FMN contacts are provided by Asn-152 and Asn-185. Asn-185 is a substrate binding site. Catalysis depends on Ser-188, which acts as the Nucleophile. Asn-190 provides a ligand contact to substrate. Lys-223 and Thr-251 together coordinate FMN. 252–253 (NT) serves as a coordination point for substrate. Residues Gly-280, Gly-309, and 330–331 (YT) contribute to the FMN site. The disordered stretch occupies residues 352–376 (RNPAPSSPERMPTGIQSGRKIVMDP).

The protein belongs to the dihydroorotate dehydrogenase family. Type 2 subfamily. Monomer. FMN is required as a cofactor.

It localises to the cell membrane. It catalyses the reaction (S)-dihydroorotate + a quinone = orotate + a quinol. The protein operates within pyrimidine metabolism; UMP biosynthesis via de novo pathway; orotate from (S)-dihydroorotate (quinone route): step 1/1. Catalyzes the conversion of dihydroorotate to orotate with quinone as electron acceptor. This Synechococcus sp. (strain JA-3-3Ab) (Cyanobacteria bacterium Yellowstone A-Prime) protein is Dihydroorotate dehydrogenase (quinone).